The sequence spans 65 residues: Large ribosomal subunit protein uL29 (65 aa).

The protein belongs to the universal ribosomal protein uL29 family.

The polypeptide is Large ribosomal subunit protein uL29 (Natranaerobius thermophilus (strain ATCC BAA-1301 / DSM 18059 / JW/NM-WN-LF)).